We begin with the raw amino-acid sequence, 299 residues long: Small ribosomal subunit protein uS2 (299 aa).

The interval 210–299 is disordered; it reads AEKEEQTQVV…GAATDNSWAS (90 aa). The span at 275-285 shows a compositional bias: polar residues; it reads WASTGTATVGP.

Belongs to the universal ribosomal protein uS2 family. As to quaternary structure, component of the small ribosomal subunit. Mature ribosomes consist of a small (40S) and a large (60S) subunit. The 40S subunit contains about 33 different proteins and 1 molecule of RNA (18S). The 60S subunit contains about 49 different proteins and 3 molecules of RNA (28S, 5.8S and 5S). Interacts with ribosomal protein S21.

Its subcellular location is the cytoplasm. In terms of biological role, required for the assembly and/or stability of the 40S ribosomal subunit. Required for the processing of the 20S rRNA-precursor to mature 18S rRNA in a late step of the maturation of 40S ribosomal subunits. This is Small ribosomal subunit protein uS2 from Ornithodoros parkeri (Soft tick).